The sequence spans 252 residues: 3-deoxy-manno-octulosonate cytidylyltransferase (252 aa).

It belongs to the KdsB family.

It localises to the cytoplasm. It catalyses the reaction 3-deoxy-alpha-D-manno-oct-2-ulosonate + CTP = CMP-3-deoxy-beta-D-manno-octulosonate + diphosphate. The protein operates within nucleotide-sugar biosynthesis; CMP-3-deoxy-D-manno-octulosonate biosynthesis; CMP-3-deoxy-D-manno-octulosonate from 3-deoxy-D-manno-octulosonate and CTP: step 1/1. It functions in the pathway bacterial outer membrane biogenesis; lipopolysaccharide biosynthesis. In terms of biological role, activates KDO (a required 8-carbon sugar) for incorporation into bacterial lipopolysaccharide in Gram-negative bacteria. The protein is 3-deoxy-manno-octulosonate cytidylyltransferase of Rhodospirillum rubrum (strain ATCC 11170 / ATH 1.1.1 / DSM 467 / LMG 4362 / NCIMB 8255 / S1).